A 196-amino-acid polypeptide reads, in one-letter code: Adenylate kinase (196 aa).

9 to 17 (GIPGVGKST) serves as a coordination point for ATP.

This sequence belongs to the archaeal adenylate kinase family.

It localises to the cytoplasm. The enzyme catalyses AMP + ATP = 2 ADP. This is Adenylate kinase from Thermococcus kodakarensis (strain ATCC BAA-918 / JCM 12380 / KOD1) (Pyrococcus kodakaraensis (strain KOD1)).